Here is a 543-residue protein sequence, read N- to C-terminus: Putative pectinesterase/pectinesterase inhibitor 22 (543 aa).

Residues 1–19 form the signal peptide; that stretch reads MGITTALLLVMLMSVHTSS. Residues 38 to 197 are pectinesterase inhibitor 22; that stretch reads AKACQFIDAH…TQLVSNVLDM (160 aa). 2 N-linked (GlcNAc...) asparagine glycosylation sites follow: N211 and N263. Positions 240 to 527 are pectinesterase 22; the sequence is NTVVAIDGKG…FTVGSFIDGR (288 aa). Residues T315 and Q345 each coordinate substrate. The active-site Proton donor; for pectinesterase activity is the D368. C382 and C402 are disulfide-bonded. D389 (nucleophile; for pectinesterase activity) is an active-site residue. Substrate-binding residues include R448 and W450.

In the N-terminal section; belongs to the PMEI family. The protein in the C-terminal section; belongs to the pectinesterase family.

The protein localises to the secreted. The protein resides in the cell wall. The enzyme catalyses [(1-&gt;4)-alpha-D-galacturonosyl methyl ester](n) + n H2O = [(1-&gt;4)-alpha-D-galacturonosyl](n) + n methanol + n H(+). It participates in glycan metabolism; pectin degradation; 2-dehydro-3-deoxy-D-gluconate from pectin: step 1/5. Functionally, acts in the modification of cell walls via demethylesterification of cell wall pectin. This chain is Putative pectinesterase/pectinesterase inhibitor 22 (PME22), found in Arabidopsis thaliana (Mouse-ear cress).